A 510-amino-acid chain; its full sequence is ATP synthase subunit alpha, mitochondrial (510 aa).

Position 171–178 (171–178 (GDRQTGKT)) interacts with ATP.

In terms of assembly, F-type ATP synthases have 2 components, the catalytic core F(1) and the membrane-embedded component F(0), linked together by a central stalk and a peripheral stalk. The central stalk, also called rotor shaft, is often seen as part of F(1). The peripheral stalk is seen as part of F(0). F(0) contains the membrane channel next to the rotor. F-type ATP synthases form dimers but each monomer functions independently in ATP generation. The dimer consists of 18 different polypeptides: ATP1 (subunit alpha, part of F(1), 3 molecules per monomer), ATP2 (subunit beta, part of F(1), 3 molecules per monomer), ATP3 (subunit gamma, part of the central stalk), ATP4 (subunit b, part of the peripheral stalk), ATP5/OSCP (subunit 5/OSCP, part of the peripheral stalk), ATP6 (subunit a, part of the peripheral stalk), ATP7 (subunit d, part of the peripheral stalk), ATP8 (subunit 8, part of the peripheral stalk), OLI1 (subunit c, part of the rotor, 10 molecules per monomer), ATP14 (subunit h, part of the peripheral stalk), ATP15 (subunit epsilon, part of the central stalk), ATP16 (subunit delta, part of the central stalk), ATP17 (subunit f, part of the peripheral stalk), ATP18 (subunit i/j, part of the peripheral stalk). Dimer-specific subunits are ATP19 (subunit k, at interface between monomers), ATP20 (subunit g, at interface between monomers), TIM11 (subunit e, at interface between monomers). Also contains subunit L.

The protein resides in the mitochondrion inner membrane. Its function is as follows. Mitochondrial membrane ATP synthase (F(1)F(0) ATP synthase or Complex V) produces ATP from ADP in the presence of a proton gradient across the membrane which is generated by electron transport complexes of the respiratory chain. F-type ATP synthases consist of two structural domains, F(1) - containing the extramembraneous catalytic core, and F(0) - containing the membrane proton channel, linked together by a central stalk and a peripheral stalk. During catalysis, ATP synthesis in the catalytic domain of F(1) is coupled via a rotary mechanism of the central stalk subunits to proton translocation. Subunits alpha/ATP1 and beta/ATP2 form the catalytic core in F(1). Rotation of the central stalk against the surrounding alpha/ATP1(3)beta/ATP2(3) subunits leads to hydrolysis of ATP in three separate catalytic sites on the beta/ATP2 subunits. Subunit alpha/ATP1 does not bear the catalytic high-affinity ATP-binding sites. This chain is ATP synthase subunit alpha, mitochondrial, found in Pichia angusta (Yeast).